The primary structure comprises 572 residues: Proline--tRNA ligase (572 aa).

It belongs to the class-II aminoacyl-tRNA synthetase family. ProS type 1 subfamily. As to quaternary structure, homodimer.

The protein localises to the cytoplasm. The enzyme catalyses tRNA(Pro) + L-proline + ATP = L-prolyl-tRNA(Pro) + AMP + diphosphate. In terms of biological role, catalyzes the attachment of proline to tRNA(Pro) in a two-step reaction: proline is first activated by ATP to form Pro-AMP and then transferred to the acceptor end of tRNA(Pro). As ProRS can inadvertently accommodate and process non-cognate amino acids such as alanine and cysteine, to avoid such errors it has two additional distinct editing activities against alanine. One activity is designated as 'pretransfer' editing and involves the tRNA(Pro)-independent hydrolysis of activated Ala-AMP. The other activity is designated 'posttransfer' editing and involves deacylation of mischarged Ala-tRNA(Pro). The misacylated Cys-tRNA(Pro) is not edited by ProRS. The protein is Proline--tRNA ligase of Enterobacter sp. (strain 638).